The chain runs to 239 residues: tRNA (guanine-N(7)-)-methyltransferase (239 aa).

The S-adenosyl-L-methionine site is built by E69, E94, D121, and D144. The active site involves D144. Substrate is bound at residue K148. Residues 150-155 are interaction with RNA; it reads RHNKRR. Substrate is bound by residues D180 and 217–220; that span reads TKFE.

This sequence belongs to the class I-like SAM-binding methyltransferase superfamily. TrmB family. In terms of assembly, monomer.

It catalyses the reaction guanosine(46) in tRNA + S-adenosyl-L-methionine = N(7)-methylguanosine(46) in tRNA + S-adenosyl-L-homocysteine. The protein operates within tRNA modification; N(7)-methylguanine-tRNA biosynthesis. Its function is as follows. Catalyzes the formation of N(7)-methylguanine at position 46 (m7G46) in tRNA. This is tRNA (guanine-N(7)-)-methyltransferase from Pectobacterium atrosepticum (strain SCRI 1043 / ATCC BAA-672) (Erwinia carotovora subsp. atroseptica).